Reading from the N-terminus, the 226-residue chain is Killer cell lectin-like receptor subfamily E member 1 (226 aa).

Residues 1–28 (MDEAPVTRSTLNVNSQQKSKAKNKIKNT) are disordered. At 1–68 (MDEAPVTRST…GKGNCSPPWR (68 aa)) the chain is on the cytoplasmic side. Positions 7 to 18 (TRSTLNVNSQQK) are enriched in polar residues. The helical; Signal-anchor for type II membrane protein transmembrane segment at 69–89 (LLSSVLGAMCLLLMAVAMVMT) threads the bilayer. Over 90-226 (TFTTKSSSER…ANKLTYICKK (137 aa)) the chain is Extracellular. Cystine bridges form between Cys-113–Cys-124, Cys-141–Cys-224, and Cys-202–Cys-216. Residues 120-225 (FRCSCYFFSK…CANKLTYICK (106 aa)) enclose the C-type lectin domain. N-linked (GlcNAc...) asparagine glycosylation is present at Asn-145.

In terms of assembly, heterodimer; with KLRI1 or KLRI2. In terms of tissue distribution, expressed in natural killer (NK) cells (at protein level). Also detected in natural killer T (NKT) cells (at protein level). Has little or no expression in T cells (at protein level).

The protein localises to the cell membrane. In terms of biological role, lectin-like receptor for natural killer (NK) cells. Can either inhibit or activate NK cell cytotoxic activity, depending on its binding partner. Heterodimer formation with KLRI1 mediates NK cell inhibition whereas heterodimer formation with KLRI2 mediates NK cell activation. Plays a role in allogeneic recognition by the immune system. In Mus musculus (Mouse), this protein is Killer cell lectin-like receptor subfamily E member 1.